A 186-amino-acid polypeptide reads, in one-letter code: Small ribosomal subunit protein uS19 (186 aa).

The tract at residues 1–95 (MREAIKRYGS…YEELYAQYKQ (95 aa)) is unknown. The segment at 96 to 186 (MTEKKAYVDP…EKTAKVVKKK (91 aa)) is small ribosomal subunit protein uS19.

It belongs to the universal ribosomal protein uS19 family.

Functionally, protein S19 forms a complex with S13 that binds strongly to the 16S ribosomal RNA. In Aquifex aeolicus (strain VF5), this protein is Small ribosomal subunit protein uS19.